Reading from the N-terminus, the 300-residue chain is Serine/arginine-rich splicing factor SR34A (300 aa).

Positions 7–82 constitute an RRM 1 domain; sequence RSIYVGNLPG…CRLRVELAHG (76 aa). Disordered regions lie at residues 81–110 and 198–300; these read HGGR…GGGG and YESS…EGSV. The segment covering 94-110 has biased composition (gly residues); it reads GYGGGGSGYGGGGGGGG. In terms of domain architecture, RRM 2 spans 122 to 200; sequence FRVIVRGLPS…GFIRVKKYES (79 aa). Basic residues predominate over residues 203-239; it reads SRSRSPSRSRSRSRSRSRSRGRGRSHSRSRSLSRSKS. 8 positions are modified to phosphoserine: S207, S209, S231, S233, S239, S259, S275, and S285. Positions 253-262 are enriched in low complexity; it reads SRSISKSRSP. A compositionally biased stretch (basic residues) spans 275 to 287; it reads SRSKSRSRSRSRS.

The protein belongs to the splicing factor SR family. SR subfamily. In terms of assembly, component of the spliceosome.

It localises to the nucleus speckle. The protein resides in the nucleus. The protein localises to the nucleoplasm. Its function is as follows. Probably involved in intron recognition and spliceosome assembly. The chain is Serine/arginine-rich splicing factor SR34A (SR34A) from Arabidopsis thaliana (Mouse-ear cress).